The sequence spans 367 residues: MAELQQLQQLQEFDIPTGREALRGNHSALLRVANYCEDNYLQATDKRKALEETMAFTTQALASVAYQVGNLAGHTLRMLDLQGAALRQVEAKMSTLGQMVNMHMEKVARREIGTLATVVRLPSNQKVIPPESLPSLTPYHRKPLNFACLDDIGHGVKDLSTQLSRTGTLSRKSIKAPATPVSATLGRPPRIPEPVQLPAVPDGKLSAASSASSLASAGSAEGASGIPQSKGQVAPATPPPPPVAPVTPPPPPLSAEVFLPPPPLEVSQPPLEAELPLPPPPALEGDELGLLPPPPPGFGPDEPSWVPASYLEKVVTLYPYTRQKDNELSFSEGTVICVTRRYSDGWCEGVSSEGTGFFPGNYVEPSC.

A coiled-coil region spans residues 36 to 64 (CEDNYLQATDKRKALEETMAFTTQALASV). The disordered stretch occupies residues 163-273 (LSRTGTLSRK…LEVSQPPLEA (111 aa)). Positions 206-225 (SAASSASSLASAGSAEGASG) are enriched in low complexity. Phosphoserine occurs at positions 216 and 219. Pro residues predominate over residues 236-264 (ATPPPPPVAPVTPPPPPLSAEVFLPPPPL). Residues 309–367 (SYLEKVVTLYPYTRQKDNELSFSEGTVICVTRRYSDGWCEGVSSEGTGFFPGNYVEPSC) enclose the SH3 domain. Ser343 bears the Phosphoserine mark.

This sequence belongs to the ABI family. In terms of assembly, may interact with PAK1 and PAK2. Probably interacts with TARSH.

The protein localises to the cytoplasm. In terms of biological role, inhibits ectopic tumor cell metastasis of SRD cells. In vitro, reduces cell motility. This chain is ABI gene family member 3 (Abi3), found in Mus musculus (Mouse).